A 401-amino-acid polypeptide reads, in one-letter code: Nodal homolog 3-A (401 aa).

Residues 1-18 (MAFLSLFLCLVFSSPLMA) form the signal peptide. The propeptide occupies 19-274 (MPPALQGRKA…KVNGFRRLRR (256 aa)). Residues N168, N337, and N344 are each glycosylated (N-linked (GlcNAc...) asparagine). Cystine bridges form between C299–C365 and C328–C396.

Belongs to the TGF-beta family. As to quaternary structure, monomer. The propeptide region interacts with bmp4 in a non-covalent manner. As to expression, expressed in the dorsal marginal region of late blastula, becoming restricted to the Spemann organizer at the early gastrula stage.

The protein resides in the secreted. Its function is as follows. Exhibits mesoderm-dorsalizing activity and neural-inducing activity, but lacks mesoderm-inducing activity. Regulates the expression of specific mesodermal and neural genes. Induces convergent extension movements at the embryonic midline by activating the fgf signaling pathway to induce t/bra expression in the organizer region. Acts with wnt11 to induce Spemann organizer cells and induce axis formation. The unprocessed protein antagonizes bmp-signaling. The sequence is that of Nodal homolog 3-A from Xenopus tropicalis (Western clawed frog).